A 206-amino-acid chain; its full sequence is uncharacterized protein (206 aa).

This is an uncharacterized protein from Methanocaldococcus jannaschii (strain ATCC 43067 / DSM 2661 / JAL-1 / JCM 10045 / NBRC 100440) (Methanococcus jannaschii).